Consider the following 326-residue polypeptide: Protein spaetzle (326 aa).

An N-terminal signal peptide occupies residues 1 to 25 (MMTPMWISLFKVLLLLFAFFATYEA). Residue N48 is glycosylated (N-linked (GlcNAc...) asparagine). Positions 56–82 (FMPIPTQHDDPTQKQKQNQNQSPIPET) are disordered. The segment covering 69 to 80 (KQKQNQNQSPIP) has biased composition (polar residues). N-linked (GlcNAc...) asparagine glycosylation is found at N114 and N164. The segment at 152–174 (YRPPQSPARPLRNDTKEHNPCAK) is disordered. Over residues 162-174 (LRNDTKEHNPCAK) the composition is skewed to basic and acidic residues. In terms of domain architecture, Spaetzle spans 228–322 (FLCRSIRKLV…FKIPSCCKCA (95 aa)). Disulfide bonds link C230–C288, C267–C319, and C274–C321.

Homodimer; disulfide-linked. In the presence of Tl, crystal structures show one Tl molecule bound to a spaetzle C-106 homodimer. However, the active complex probably consists of two Tl molecules bound to a spaetzle C-106 homodimer. This is supported by in vitro experiments which also show binding of the spaetzle C-106 dimer to 2 Tl receptors. Ligand binding induces conformational changes in the extracellular domain of Tl. This may enable a secondary homodimerization interface at the C-terminus of the Tl extracellular domain. Post-translationally, during embryonic development proteolytically processed by activated ea/easter; ea cleaves the signal peptide and also generates the C-terminal 12 kDa active ligand for the Toll receptor, C-106 (except for isoform 8.24 and isoform 11.27 as they do not contain the cleavage site). During the immune response, cleaved in the same manner by SPE. In terms of processing, extracellular forms of isoform 8.19 and isoform 11.7 are glycosylated.

It localises to the secreted. In terms of biological role, the activated form, spaetzle C-106, acts as a ligand for the Toll receptor. Binding to Toll activates the Toll signaling pathway and induces expression of the antifungal peptide drosomycin. Component of the extracellular signaling pathway that establishes dorsal-ventral polarity in the embryo. This chain is Protein spaetzle, found in Drosophila melanogaster (Fruit fly).